The primary structure comprises 282 residues: D-alanine aminotransferase (282 aa).

Tyr-32 provides a ligand contact to substrate. Arg-51 provides a ligand contact to pyridoxal 5'-phosphate. Substrate is bound by residues Arg-99 and His-101. Lys-146 functions as the Proton acceptor in the catalytic mechanism. Lys-146 is modified (N6-(pyridoxal phosphate)lysine). Pyridoxal 5'-phosphate is bound at residue Glu-178.

It belongs to the class-IV pyridoxal-phosphate-dependent aminotransferase family. As to quaternary structure, homodimer. The cofactor is pyridoxal 5'-phosphate.

It carries out the reaction D-alanine + 2-oxoglutarate = D-glutamate + pyruvate. Its function is as follows. Acts on the D-isomers of alanine, leucine, aspartate, glutamate, aminobutyrate, norvaline and asparagine. The enzyme transfers an amino group from a substrate D-amino acid to the pyridoxal phosphate cofactor to form pyridoxamine and an alpha-keto acid in the first half-reaction. The second half-reaction is the reverse of the first, transferring the amino group from the pyridoxamine to a second alpha-keto acid to form the product D-amino acid via a ping-pong mechanism. This is an important process in the formation of D-alanine and D-glutamate, which are essential bacterial cell wall components. The polypeptide is D-alanine aminotransferase (dat) (Staphylococcus aureus (strain MW2)).